A 397-amino-acid chain; its full sequence is G2/mitotic-specific cyclin-B1 (397 aa).

Belongs to the cyclin family. Cyclin AB subfamily. As to quaternary structure, interacts with the cdc2 protein kinase to form a serine/threonine kinase holoenzyme complex also known as maturation promoting factor (MPF). The cyclin subunit imparts substrate specificity to the complex. When not in a complex with cdc2, interacts with spdya. Interacts with nap1l1. Interacts with nanos1.

It is found in the cytoplasm. Its subcellular location is the cytoskeleton. It localises to the microtubule organizing center. The protein resides in the centrosome. The protein localises to the nucleus. Essential for the control of the cell cycle at the G2/M (mitosis) transition. This chain is G2/mitotic-specific cyclin-B1 (ccnb1), found in Xenopus laevis (African clawed frog).